The chain runs to 394 residues: Exodeoxyribonuclease 7 large subunit (394 aa).

The protein belongs to the XseA family. Heterooligomer composed of large and small subunits.

Its subcellular location is the cytoplasm. It carries out the reaction Exonucleolytic cleavage in either 5'- to 3'- or 3'- to 5'-direction to yield nucleoside 5'-phosphates.. Functionally, bidirectionally degrades single-stranded DNA into large acid-insoluble oligonucleotides, which are then degraded further into small acid-soluble oligonucleotides. The polypeptide is Exodeoxyribonuclease 7 large subunit (Thermotoga sp. (strain RQ2)).